Consider the following 132-residue polypeptide: Protein LEKR1 (132 aa).

Residues 37–116 adopt a coiled-coil conformation; it reads FKAMEEKVKA…KKQLSHLQDE (80 aa).

The sequence is that of Protein LEKR1 (LEKR1) from Homo sapiens (Human).